The primary structure comprises 446 residues: MNALKYFSNHLITTKKQKKINVEVTKNQDLLGPSKEVSNKYTSHSENDCVSEVDQQYDHSSSHLKESDQNQERKNSVPKKPKALRSILIEKIASILWALLLFLPYYLIIKPLMSLWFVFTFPLSVIERRVKHTDKRNRGSNASENELPVSSSNINDSSEKTNPKNCNLNTIPEAVEDDLNASDEIILQRDNVKGSLLRAQSVKSRPRSYSKSELSLSNHSSSNTVFGTKRMGRFLFPKKLIPKSVLNTQKKKKLVIDLDETLIHSASRSTTHSNSSQGHLVEVKFGLSGIRTLYFIHKRPYCDLFLTKVSKWYDLIIFTASMKEYADPVIDWLESSFPSSFSKRYYRSDCVLRDGVGYIKDLSIVKDSEENGKGSSSSLDDVIIIDNSPVSYAMNVDNAIQVEGWISDPTDTDLLNLLPFLEAMRYSTDVRNILALKHGEKAFNIN.

The tract at residues Val-53 to Lys-80 is disordered. The segment covering Gln-56–Asn-75 has biased composition (basic and acidic residues). Residues Ile-87–Leu-103 form a helical membrane-spanning segment. Residues His-132–Leu-168 form a disordered region. The segment covering Gly-139 to Asp-156 has biased composition (polar residues). The FCP1 homology domain maps to Asn-247–Met-424.

Belongs to the Dullard family. As to quaternary structure, component of the NEM1-SPO7 complex.

It is found in the endoplasmic reticulum membrane. It localises to the nucleus membrane. It carries out the reaction O-phospho-L-seryl-[protein] + H2O = L-seryl-[protein] + phosphate. It catalyses the reaction O-phospho-L-threonyl-[protein] + H2O = L-threonyl-[protein] + phosphate. Its function is as follows. Catalytic component of the NEM1-SPO7 complex which acts as a phosphatase and dephosphorylates the phosphatidic acid phosphohydrolase PAH1. Essential for the formation of a spherical nucleus and meiotic division. The NEM1-SPOo7 protein phosphatase is required for efficient mitophagy under prolonged respiration, as well as for reticulophagy and pexophagy. This chain is Nuclear envelope morphology protein 1 (NEM1), found in Saccharomyces cerevisiae (strain ATCC 204508 / S288c) (Baker's yeast).